The sequence spans 446 residues: MNAQEANFDGLVGPTHNYAGLSFGNVASLNNEKSAANPKAAAKQGLRKMKQLADLGFAQGVLPPQERPSLRLLRELGFSGKDADVIAKAAKQAPELLAAASSASAMWTANAATVSPSADTSDGRVHFTPANLCSKLHRAIEHEATRRTLSTLFADPAHFAVHEALTGTPALGDEGAANHTRFCAEYGKPGIEFFVYGRAEYRRGPEPKRFPARQTFEASRAVAHRHGLAEEATVYAQQDPDVIDAGVFHNDVISVGNRDTLFTHERAFVNKQAIYDTLTAALDARGARLNVIEVPDAAVSVNDAVTSYLFNSQLLSRADGSQVLVVPQECRENANVAAYLDQLAAGNGPIHDVLVFDLRESMKNGGGPACLRLRVVLNEAERAAVTSNVWINDTLFASLDAWIDKHYRDRLAPEDLADPALLDESRTALDELTQILRVGSLYDFQR.

Substrate-binding positions include 19–28 (AGLSFGNVAS), Asn110, and 137–138 (HR). Residue Glu174 is part of the active site. Residue Arg213 participates in substrate binding. His249 is an active-site residue. Residues Asp251 and Asn364 each contribute to the substrate site. Cys370 functions as the Nucleophile in the catalytic mechanism.

It belongs to the succinylarginine dihydrolase family. In terms of assembly, homodimer.

It carries out the reaction N(2)-succinyl-L-arginine + 2 H2O + 2 H(+) = N(2)-succinyl-L-ornithine + 2 NH4(+) + CO2. Its pathway is amino-acid degradation; L-arginine degradation via AST pathway; L-glutamate and succinate from L-arginine: step 2/5. Functionally, catalyzes the hydrolysis of N(2)-succinylarginine into N(2)-succinylornithine, ammonia and CO(2). The sequence is that of N-succinylarginine dihydrolase from Burkholderia cenocepacia (strain ATCC BAA-245 / DSM 16553 / LMG 16656 / NCTC 13227 / J2315 / CF5610) (Burkholderia cepacia (strain J2315)).